Reading from the N-terminus, the 1231-residue chain is Alpha-protein kinase 1 (1231 aa).

Residues Phe-61, Gln-67, Arg-116, 150 to 153, Asp-231, Lys-233, 236 to 237, and Phe-295 contribute to the ADP-D-glycero-beta-D-manno-heptose site; these read RQAR and ST. Disordered regions lie at residues 508–540, 609–637, 692–739, 767–791, 811–843, and 859–888; these read ERVS…RSWT, GSGQ…SSRA, GSNN…GDVP, TFAP…SPSQ, PDGS…DEEG, and AHRP…PIFD. Residues 509–522 show a composition bias toward polar residues; it reads RVSSQDSRSTASSK. Over residues 524-537 the composition is skewed to basic and acidic residues; it reads SKKDQGKLQRERGR. A compositionally biased stretch (low complexity) spans 700-714; it reads SSHSCGSDSWSLSSS. Residues 775–784 are compositionally biased toward acidic residues; the sequence is PEGETAESTD. The 221-residue stretch at 1003–1223 folds into the Alpha-type protein kinase domain; the sequence is KYSKKSELWT…ICHRLSLTRP (221 aa).

This sequence belongs to the protein kinase superfamily. Alpha-type protein kinase family. ALPK subfamily. As to expression, widely expressed. Expressed in the retina and in sweat glands, especially in the myoepithelial cells.

It is found in the cytoplasm. Its subcellular location is the cytosol. The protein resides in the cytoskeleton. It localises to the spindle pole. The protein localises to the microtubule organizing center. It is found in the centrosome. Its subcellular location is the cell projection. The protein resides in the cilium. The catalysed reaction is L-seryl-[protein] + ATP = O-phospho-L-seryl-[protein] + ADP + H(+). The enzyme catalyses L-threonyl-[protein] + ATP = O-phospho-L-threonyl-[protein] + ADP + H(+). Its activity is regulated as follows. Serine/threonine-protein kinase activity is stimulated upon ADP-D-glycero-beta-D-manno-heptose (ADP-Heptose)-binding. Functionally, serine/threonine-protein kinase that detects bacterial pathogen-associated molecular pattern metabolites (PAMPs) and initiates an innate immune response, a critical step for pathogen elimination and engagement of adaptive immunity. Specifically recognizes and binds ADP-D-glycero-beta-D-manno-heptose (ADP-Heptose), a potent PAMP present in all Gram-negative and some Gram-positive bacteria. ADP-Heptose-binding stimulates its kinase activity to phosphorylate and activate TIFA, triggering pro-inflammatory NF-kappa-B signaling. May be involved in monosodium urate monohydrate (MSU)-induced inflammation by mediating phosphorylation of unconventional myosin MYO9A. May also play a role in apical protein transport by mediating phosphorylation of unconventional myosin MYO1A. May play a role in ciliogenesis. The chain is Alpha-protein kinase 1 from Mus musculus (Mouse).